The sequence spans 364 residues: Aminomethyltransferase (364 aa).

It belongs to the GcvT family. In terms of assembly, the glycine cleavage system is composed of four proteins: P, T, L and H.

It carries out the reaction N(6)-[(R)-S(8)-aminomethyldihydrolipoyl]-L-lysyl-[protein] + (6S)-5,6,7,8-tetrahydrofolate = N(6)-[(R)-dihydrolipoyl]-L-lysyl-[protein] + (6R)-5,10-methylene-5,6,7,8-tetrahydrofolate + NH4(+). In terms of biological role, the glycine cleavage system catalyzes the degradation of glycine. In Salmonella paratyphi B (strain ATCC BAA-1250 / SPB7), this protein is Aminomethyltransferase.